A 170-amino-acid polypeptide reads, in one-letter code: ATP synthase subunit b (170 aa).

A helical membrane pass occupies residues 22-41 (VLNWAVVVFGLYKFLPGFLG).

This sequence belongs to the ATPase B chain family. F-type ATPases have 2 components, F(1) - the catalytic core - and F(0) - the membrane proton channel. F(1) has five subunits: alpha(3), beta(3), gamma(1), delta(1), epsilon(1). F(0) has four main subunits: a(1), b(1), b'(1) and c(10-14). The alpha and beta chains form an alternating ring which encloses part of the gamma chain. F(1) is attached to F(0) by a central stalk formed by the gamma and epsilon chains, while a peripheral stalk is formed by the delta, b and b' chains.

It is found in the cellular thylakoid membrane. F(1)F(0) ATP synthase produces ATP from ADP in the presence of a proton or sodium gradient. F-type ATPases consist of two structural domains, F(1) containing the extramembraneous catalytic core and F(0) containing the membrane proton channel, linked together by a central stalk and a peripheral stalk. During catalysis, ATP synthesis in the catalytic domain of F(1) is coupled via a rotary mechanism of the central stalk subunits to proton translocation. Functionally, component of the F(0) channel, it forms part of the peripheral stalk, linking F(1) to F(0). In Prochlorococcus marinus subsp. pastoris (strain CCMP1986 / NIES-2087 / MED4), this protein is ATP synthase subunit b.